The sequence spans 304 residues: MIKKMKSYINMNSTVTTLGANYLVHTGYFNTISRLKVCTIASYRYYSTSKSDSQSSDLPPVPIFTINNLNNKDSIKSSRILLKDKGGIYSFINTVNNNQYIGSAKDFYLRLNEHLENKKSNIALQKAFTKYGLDKFIFCIYEYFTYESKIISHKALTDLETSYINRFNFDNLYNFKAIATSSLGYKHTEEARLKMVDYYKDKNNHPMFGKTHTEEALGLISKPGELNPMFGKKHSEATKASMSEKKNKYPLGVGIYDLEDNLILKFSNNVELAKYLGISKVTVGKYLNSGLVYNKTYRFKPIQD.

A GIY-YIG domain is found at Asp84–Phe175.

It to endonucleases of group I introns of fungi and phage.

It localises to the mitochondrion. Mitochondrial DNA endonuclease involved in intron homing. The protein is Probable intron-encoded endonuclease 1 of Neurospora crassa (strain ATCC 24698 / 74-OR23-1A / CBS 708.71 / DSM 1257 / FGSC 987).